We begin with the raw amino-acid sequence, 281 residues long: Ribosomal RNA small subunit methyltransferase A (281 aa).

Positions 24, 26, 51, 72, 96, and 123 each coordinate S-adenosyl-L-methionine.

Belongs to the class I-like SAM-binding methyltransferase superfamily. rRNA adenine N(6)-methyltransferase family. RsmA subfamily.

It is found in the cytoplasm. It catalyses the reaction adenosine(1518)/adenosine(1519) in 16S rRNA + 4 S-adenosyl-L-methionine = N(6)-dimethyladenosine(1518)/N(6)-dimethyladenosine(1519) in 16S rRNA + 4 S-adenosyl-L-homocysteine + 4 H(+). Its function is as follows. Specifically dimethylates two adjacent adenosines (A1518 and A1519) in the loop of a conserved hairpin near the 3'-end of 16S rRNA in the 30S particle. May play a critical role in biogenesis of 30S subunits. The sequence is that of Ribosomal RNA small subunit methyltransferase A from Ureaplasma urealyticum serovar 10 (strain ATCC 33699 / Western).